Reading from the N-terminus, the 82-residue chain is ATP synthase subunit c, chloroplastic (82 aa).

The next 2 membrane-spanning stretches (helical) occupy residues 3 to 23 (PLICAASVVGAGLAIGLGAIG) and 57 to 77 (LAFMEALTIYGLVVALALMFA).

The protein belongs to the ATPase C chain family. As to quaternary structure, F-type ATPases have 2 components, F(1) - the catalytic core - and F(0) - the membrane proton channel. F(1) has five subunits: alpha(3), beta(3), gamma(1), delta(1), epsilon(1). F(0) has four main subunits: a(1), b(1), b'(1) and c(10-14). The alpha and beta chains form an alternating ring which encloses part of the gamma chain. F(1) is attached to F(0) by a central stalk formed by the gamma and epsilon chains, while a peripheral stalk is formed by the delta, b and b' chains.

Its subcellular location is the plastid. It localises to the chloroplast thylakoid membrane. In terms of biological role, f(1)F(0) ATP synthase produces ATP from ADP in the presence of a proton or sodium gradient. F-type ATPases consist of two structural domains, F(1) containing the extramembraneous catalytic core and F(0) containing the membrane proton channel, linked together by a central stalk and a peripheral stalk. During catalysis, ATP synthesis in the catalytic domain of F(1) is coupled via a rotary mechanism of the central stalk subunits to proton translocation. Functionally, key component of the F(0) channel; it plays a direct role in translocation across the membrane. A homomeric c-ring of between 10-14 subunits forms the central stalk rotor element with the F(1) delta and epsilon subunits. The polypeptide is ATP synthase subunit c, chloroplastic (Ostreococcus tauri).